A 136-amino-acid polypeptide reads, in one-letter code: Large ribosomal subunit protein bL17 (136 aa).

It belongs to the bacterial ribosomal protein bL17 family. As to quaternary structure, part of the 50S ribosomal subunit. Contacts protein L32.

The chain is Large ribosomal subunit protein bL17 from Rickettsia africae (strain ESF-5).